The primary structure comprises 209 residues: Orotate phosphoribosyltransferase (209 aa).

5-phospho-alpha-D-ribose 1-diphosphate is bound by residues Arg96, Lys100, His102, and 122-130 (EDLISTGGS). Ser126 contributes to the orotate binding site.

It belongs to the purine/pyrimidine phosphoribosyltransferase family. PyrE subfamily. Homodimer. Requires Mg(2+) as cofactor.

It carries out the reaction orotidine 5'-phosphate + diphosphate = orotate + 5-phospho-alpha-D-ribose 1-diphosphate. The protein operates within pyrimidine metabolism; UMP biosynthesis via de novo pathway; UMP from orotate: step 1/2. Its function is as follows. Catalyzes the transfer of a ribosyl phosphate group from 5-phosphoribose 1-diphosphate to orotate, leading to the formation of orotidine monophosphate (OMP). This chain is Orotate phosphoribosyltransferase, found in Streptococcus agalactiae serotype Ia (strain ATCC 27591 / A909 / CDC SS700).